Here is an 83-residue protein sequence, read N- to C-terminus: MALYIKDPTVDRMAEKLQERLGVRTKTDAVRIALQHELDRVEDEIPLREKLAALRQQARDRLGPPVHGIDMKKLMDELWEEGE.

This is an uncharacterized protein from Rhizobium meliloti (strain 1021) (Ensifer meliloti).